A 325-amino-acid chain; its full sequence is Hydroxymethylglutaryl-CoA lyase, mitochondrial (325 aa).

Residues 1–27 (MAAMTKALPRRLVGLASLRAVSTSSMD) constitute a mitochondrion transit peptide. In terms of domain architecture, Pyruvate carboxyltransferase spans 33–300 (VKIVEVGPRD…HTGVNLQKLL (268 aa)). Position 41 (Arg41) interacts with substrate. Position 42 (Asp42) interacts with a divalent metal cation. Lys48 is subject to N6-acetyllysine; alternate. Lys48 is subject to N6-succinyllysine; alternate. The residue at position 111 (Lys111) is an N6-acetyllysine. N6-acetyllysine; alternate occurs at positions 137 and 179. N6-succinyllysine; alternate is present on residues Lys137 and Lys179. Residues His233 and His235 each coordinate a divalent metal cation. Cys266 is a catalytic residue. Position 275 (Asn275) interacts with a divalent metal cation. The short motif at 323-325 (CKL) is the Microbody targeting signal element. The residue at position 324 (Lys324) is an N6-acetyllysine.

Belongs to the HMG-CoA lyase family. In terms of assembly, homodimer; disulfide-linked. Can also form homotetramers.

The protein localises to the mitochondrion matrix. Its subcellular location is the peroxisome. The catalysed reaction is (3S)-3-hydroxy-3-methylglutaryl-CoA = acetoacetate + acetyl-CoA. The protein operates within metabolic intermediate metabolism; (S)-3-hydroxy-3-methylglutaryl-CoA degradation; acetoacetate from (S)-3-hydroxy-3-methylglutaryl-CoA: step 1/1. In terms of biological role, mitochondrial 3-hydroxy-3-methylglutaryl-CoA lyase that catalyzes a cation-dependent cleavage of (S)-3-hydroxy-3-methylglutaryl-CoA into acetyl-CoA and acetoacetate, a key step in ketogenesis. Terminal step in leucine catabolism. Ketone bodies (beta-hydroxybutyrate, acetoacetate and acetone) are essential as an alternative source of energy to glucose, as lipid precursors and as regulators of metabolism. The polypeptide is Hydroxymethylglutaryl-CoA lyase, mitochondrial (HMGCL) (Macaca fascicularis (Crab-eating macaque)).